Reading from the N-terminus, the 150-residue chain is FAD synthase (150 aa).

Residues threonine 11–phenylalanine 12, histidine 16–histidine 19, aspartate 96, and tyrosine 124 contribute to the ATP site.

It belongs to the archaeal FAD synthase family. As to quaternary structure, homodimer. A divalent metal cation is required as a cofactor.

The catalysed reaction is FMN + ATP + H(+) = FAD + diphosphate. Its pathway is cofactor biosynthesis; FAD biosynthesis; FAD from FMN: step 1/1. In terms of biological role, catalyzes the transfer of the AMP portion of ATP to flavin mononucleotide (FMN) to produce flavin adenine dinucleotide (FAD) coenzyme. The protein is FAD synthase of Methanococcus maripaludis (strain DSM 14266 / JCM 13030 / NBRC 101832 / S2 / LL).